The primary structure comprises 1399 residues: MKDLLNLLKNQGQVEEFDAIRIGLASPEMIRSWSFGEVKKPETINYRTFKPERDGLFCAKIFGPVKDYECLCGKYKRLKHRGVICEKCGVEVALAKVRRERMAHIELASPVAHIWFLKSLPSRIGLLMDMTLRDIERVLYFESYVVIDPGMTTLEKGQLLNDEQYFEALEEFGDDFDARMGAEAVRELLHAIDLEHEIGRLREEIPQTNSETKIKKLSKRLKLMEAFQGSGNLPEWMVLTVLPVLPPDLRPLVPLDGGRFATSDLNDLYRRVINRNNRLKRLLDLSAPDIIVRNEKRMLQEAVDALLDNGRRGRAITGSNKRPLKSLADMIKGKQGRFRQNLLGKRVDYSGRSVITVGPTLRLHQCGLPKKMALELFKPFIFGKLEMRGLATTIKAAKKMVERELPEVWDVLAEVIREHPVLLNRAPTLHRLGIQAFEPVLIEGKAIQLHPLVCAAYNADFDGDQMAVHVPLTLEAQLEARALMMSTNNILSPANGEPIIVPSQDVVLGLYYMTREAINAKGEGRVFADLQEVDRVFRAGEAALHAKVKVRIHETVNDRDGGSVKNTRIVDTTVGRALLFQVVPAGLSYDVVNQPMKKKAISKLINQCYRVVGLKETVIFADQLMYTGFAYSTISGVSIGVNDFVIPDEKARIIDAATEEVKEIESQYASGLVTQGEKYNKVIDLWSKANDEVSKAMMSNLSKEKVIDRHGVEVDQESFNSMYMMADSGARGSAAQIRQLAGMRGLMAKPDGSIIETPITANFREGLSVLQYFISTHGARKGLADTALKTANSGYLTRRLVDVAQDLVVTEVDCGTEHGLLMTPHIEGGDVVEPLGERVLGRVIARDVFKPGTEDVIVPAGTLVDEKWVEFIELNSIDEVIVRSPISCETRYGICAKCYGRDLARGHQVNIGEAVGVIAAQSIGEPGTQLTMRTFHIGGAASRTSAADSVQVKNGGTVRLHNLKHVERVDGHLVAVSRSGELAIADDFGRERERYKLPYGAVISVKEGDKVDAGSIVAKWDPHTHPIVTEMKGTVTYVGMEEGITIKRQTDELTGMTNIEVLDAKDRPAAGKDIRPAVKMVGLDGKDLLLPGTDVPAQYFLPANALVGVADGAQIAIGDVIARIPQETSKTRDITGGLPRVADLFEARRPKEASILAEVSGTIAFGKETKGKRRLVITPNDGSDPYEELIPKWRHLNVFEGEQVNRGEVISDGPSDPHDILRLLGVSALAKYIVNEIQDVYRLQGVKINDKHIETILRQMLRKVEIAESGDSSFIKGDQMELTHVLVENERLSTEDKFVSKFTRVLLGITKASLSTESFISAASFQETTRVLTEAAVTGKRDYLRGLKENVVVGRLIPAGTGLAYHSERKRRREMDKPTRVSASEVEAALTEALNSSGN.

4 residues coordinate Zn(2+): Cys-70, Cys-72, Cys-85, and Cys-88. Mg(2+)-binding residues include Asp-460, Asp-462, and Asp-464. Residues Cys-814, Cys-888, Cys-895, and Cys-898 each coordinate Zn(2+).

The protein belongs to the RNA polymerase beta' chain family. The RNAP catalytic core consists of 2 alpha, 1 beta, 1 beta' and 1 omega subunit. When a sigma factor is associated with the core the holoenzyme is formed, which can initiate transcription. Mg(2+) is required as a cofactor. Zn(2+) serves as cofactor.

It carries out the reaction RNA(n) + a ribonucleoside 5'-triphosphate = RNA(n+1) + diphosphate. Its function is as follows. DNA-dependent RNA polymerase catalyzes the transcription of DNA into RNA using the four ribonucleoside triphosphates as substrates. This is DNA-directed RNA polymerase subunit beta' from Pseudomonas savastanoi pv. phaseolicola (strain 1448A / Race 6) (Pseudomonas syringae pv. phaseolicola (strain 1448A / Race 6)).